The primary structure comprises 130 residues: MKNEISIKFNFPEGILGFEEIKEFIIKDSEHKPFSIMQSINGEINFLVTSPFNFLEKYLPNIEEEDWLDIQTENEDEKVILCIINMHVKNYKEITANLKAPIILNKKKLIGKQAISTNEEHYLRYRVFKE.

It belongs to the FliW family. In terms of assembly, interacts with translational regulator CsrA and flagellin(s).

It is found in the cytoplasm. Its function is as follows. Acts as an anti-CsrA protein, binds CsrA and prevents it from repressing translation of its target genes, one of which is flagellin. Binds to flagellin and participates in the assembly of the flagellum. The chain is Flagellar assembly factor FliW from Borrelia turicatae (strain 91E135).